A 209-amino-acid chain; its full sequence is MKLRVGQTLGTIPRQCEVLLLLLLLGLVDGVHHILSPSSAERSRAVGPGASVGSNRPSLWALPGRLLFQIIPRGAGPRCSPHRLPSKPQFWYVFGGGTQLTILGQPKSDPLVTLFLPSLKNLQANKATLVCLVSEFYPGTLVVDWKVDGVPVTQGVETTQPSKQTNNKYMVSSYLTLISDQWMPHSRYSCRVTHEGNTVEKSVSPAECS.

The N-terminal stretch at 1-30 is a signal peptide; that stretch reads MKLRVGQTLGTIPRQCEVLLLLLLLGLVDG. Residues 93-104 are j region; sequence VFGGGTQLTILG. The c region stretch occupies residues 105–209; sequence QPKSDPLVTL…EKSVSPAECS (105 aa). One can recognise an Ig-like C1-type domain in the interval 110–204; sequence PLVTLFLPSL…EGNTVEKSVS (95 aa). An intrachain disulfide couples cysteine 131 to cysteine 190.

As to quaternary structure, interacts with VPREB1A. Interacts with SYNV1/HRD1 (via N-terminus); this interaction leads to increased IGLL1 ubiquitination and degradation in pre-B cells, possibly through a lysosomal, not proteasomal, pathway. Selectively expressed in pre-B lymphocytes.

The protein resides in the endoplasmic reticulum. The protein localises to the secreted. Functionally, critical for B-cell development. The protein is Immunoglobulin lambda-like polypeptide 1 (Igll1) of Mus musculus (Mouse).